A 322-amino-acid polypeptide reads, in one-letter code: Secretion system apparatus protein SsaQ (322 aa).

It belongs to the FliN/MopA/SpaO family.

Its function is as follows. Part of a type III secretion system. The protein is Secretion system apparatus protein SsaQ (ssaQ) of Salmonella typhimurium (strain LT2 / SGSC1412 / ATCC 700720).